The chain runs to 581 residues: Adenine deaminase (581 aa).

The protein belongs to the metallo-dependent hydrolases superfamily. Adenine deaminase family. Mn(2+) is required as a cofactor.

It carries out the reaction adenine + H2O + H(+) = hypoxanthine + NH4(+). This is Adenine deaminase from Lysinibacillus sphaericus (strain C3-41).